The sequence spans 665 residues: Prelamin-A/C (665 aa).

M1 carries the N-acetylmethionine modification. The disordered stretch occupies residues 1-27 (METPSQRRPTRSGAQASSTPLSPTRIT). A head region spans residues 1 to 33 (METPSQRRPTRSGAQASSTPLSPTRITRLQEKE). The segment at 1-130 (METPSQRRPT…TKKEGDLLAA (130 aa)) is interaction with MLIP. T3 is modified (phosphothreonine). Phosphoserine is present on S5. At T10 the chain carries Phosphothreonine. Phosphoserine is present on residues S12 and S18. T19 is modified (phosphothreonine). S22 carries the phosphoserine modification. In terms of domain architecture, IF rod spans 31–387 (EKEDLQELND…KLLEGEEERL (357 aa)). Residue K32 is modified to N6-acetyllysine; alternate. An N6-succinyllysine; alternate modification is found at K32. Residue K32 forms a Glycyl lysine isopeptide (Lys-Gly) (interchain with G-Cter in SUMO2); alternate linkage. The segment at 34 to 70 (DLQELNDRLAVYIDRVRSLETENAGLRLRITESEEVV) is coil 1A. A phosphoserine mark is found at S51, S66, and S71. Residues 71-80 (SREVSGIKAA) form a linker 1 region. N6-acetyllysine occurs at positions 78 and 97. The interval 81–218 (YEAELGDARK…NIYSEELRET (138 aa)) is coil 1B. K97 is covalently cross-linked (Glycyl lysine isopeptide (Lys-Gly) (interchain with G-Cter in SUMO2)). The residue at position 107 (S107) is a Phosphoserine. 6 positions are modified to N6-acetyllysine: K108, K114, K123, K135, K144, and K155. The residue at position 171 (K171) is an N6-acetyllysine; alternate. K171 carries the N6-succinyllysine; alternate modification. A Glycyl lysine isopeptide (Lys-Gly) (interchain with G-Cter in SUMO2); alternate cross-link involves residue K171. N6-acetyllysine occurs at positions 180, 201, and 208. Residue K201 forms a Glycyl lysine isopeptide (Lys-Gly) (interchain with G-Cter in SUMO2); alternate linkage. Residue K201 forms a Glycyl lysine isopeptide (Lys-Gly) (interchain with G-Cter in SUMO); alternate linkage. K208 is covalently cross-linked (Glycyl lysine isopeptide (Lys-Gly) (interchain with G-Cter in SUMO2)). S212 carries the phosphoserine modification. Residues K219 and K233 each participate in a glycyl lysine isopeptide (Lys-Gly) (interchain with G-Cter in SUMO2) cross-link. A linker 2 region spans residues 219-242 (KRRHETRLVEIDNGKQREFESRLA). Residues K233, K260, K265, and K270 each carry the N6-acetyllysine modification. The coil 2 stretch occupies residues 243–383 (DALQELRAQH…HAYRKLLEGE (141 aa)). K260 participates in a covalent cross-link: Glycyl lysine isopeptide (Lys-Gly) (interchain with G-Cter in SUMO2); alternate. K270 is covalently cross-linked (Glycyl lysine isopeptide (Lys-Gly) (interchain with G-Cter in SUMO2); alternate). S277, S282, S301, and S307 each carry phosphoserine. A Glycyl lysine isopeptide (Lys-Gly) (interchain with G-Cter in SUMO2); alternate cross-link involves residue K311. N6-acetyllysine is present on residues K311, K316, and K341. Residues K366 and K378 each participate in a glycyl lysine isopeptide (Lys-Gly) (interchain with G-Cter in SUMO2) cross-link. The tract at residues 384-442 (EERLRLSPSPTSQRSRGRASSHSSQSQGGGSVTKKRKLESSESRSSFSQHARTSGRVAV) is disordered. Residues 384 to 665 (EERLRLSPSP…TQSSQNCSIM (282 aa)) are tail. Phosphoserine is present on residues S390, S392, S395, S398, S403, S404, S406, S407, S409, and S414. Low complexity predominate over residues 395 to 409 (SQRSRGRASSHSSQS). Phosphothreonine is present on T416. Residue K417 is modified to N6-acetyllysine. Residues K417 and K420 each participate in a glycyl lysine isopeptide (Lys-Gly) (interchain with G-Cter in SUMO2) cross-link. Residues 417 to 422 (KKRKLE) carry the Nuclear localization signal motif. A phosphoserine mark is found at S423, S426, S429, and S431. In terms of domain architecture, LTD spans 428-545 (SSFSQHARTS…EEVAMRKLVR (118 aa)). Residue K450 forms a Glycyl lysine isopeptide (Lys-Gly) (interchain with G-Cter in SUMO2); alternate linkage. Residues K450 and K457 each carry the N6-acetyllysine modification. Phosphoserine occurs at positions 458 and 463. Residues K470 and K486 each participate in a glycyl lysine isopeptide (Lys-Gly) (interchain with G-Cter in SUMO2) cross-link. N6-acetyllysine is present on K486. T496 is modified (phosphothreonine). S500 is modified (phosphoserine). 2 positions are modified to phosphothreonine: T505 and T510. Residue S546 is modified to Phosphoserine. At T548 the chain carries Phosphothreonine. Residues 552-561 (DNDDEEEDGD) are compositionally biased toward acidic residues. The segment at 552–577 (DNDDEEEDGDELLHHHRGSHCSSSGD) is disordered. Phosphoserine occurs at positions 570 and 573. K599 is covalently cross-linked (Glycyl lysine isopeptide (Lys-Gly) (interchain with G-Cter in SUMO2); alternate). Residue K599 forms a Glycyl lysine isopeptide (Lys-Gly) (interchain with G-Cter in SUMO1); alternate linkage. Phosphoserine is present on residues S613, S614, S617, and S620. O-linked (GlcNAc) serine glycans are attached at residues S626 and S629. Residues S629, S633, S637, and S653 each carry the phosphoserine modification. The propeptide at 648–662 (LLGNSSPRTQSSQNC) is removed in Lamin-A/C form. A Cysteine methyl ester modification is found at C662. C662 carries the S-farnesyl cysteine lipid modification. A propeptide spans 663–665 (SIM) (removed in Prelamin-A/C form and in Lamin-A/C form).

This sequence belongs to the intermediate filament family. In terms of assembly, homodimer of lamin A and lamin C. Lamin dimers then assemble into dimeric head-to-tail polymers. Ultimately, two head-to-tail polymers assemble laterally into a protofilament with a uniformly shaped rod of 3.5 nm in diameter. Interacts with lamin-associated polypeptides IA, IB and TMPO-alpha, RB1 and with emerin. Interacts with SREBF1, SREBF2, SUN2 and TMEM43. Interacts with TMEM201. Proteolytically processed isoform A interacts with NARF. Interacts with SUN1. Interacts with MLIP. Interacts with DMPK; may regulate nuclear envelope stability. Interacts with SUV39H1; the interaction increases stability of SUV39H1. Interacts with SYNE2. Interacts with ITSN1 isoform 2. Interacts with IFFO1; enables the formation of an interior nucleoskeleton that is recruited to DNA double-strand breaks. As to quaternary structure, interacts with EMD. Interacts (via C-terminus) with LEMD2 (via N-terminus) (in vitro). Post-translationally, proteolytic cleavage of the C-terminal of 18 residues of prelamin-A/C results in the production of lamin-A/C. The prelamin-A/C maturation pathway includes farnesylation of CAAX motif by protein farnesyltransferase (FNTA and FNTB), removal of the last three amino acids (-AAX) by RCE1/FACE2 and/or ZMPSTE24, methylation of the C-terminal cysteine by ICMT and endoproteolytic removal of the last 15 C-terminal amino acids by ZMPSTE24. Proteolytic cleavage requires prior farnesylation and methylation, and absence of these blocks cleavage. In terms of processing, farnesylation of prelamin-A/C facilitates nuclear envelope targeting. Phosphorylation plays a key role in lamin organization, subcellular localization and nuclear envelope disintegration. Phosphorylation by CDK1 at Ser-22 and Ser-392 at the onset of mitosis drives lamin disassembly and nuclear envelope breakdown. Phosphorylation at Ser-22 and Ser-392 during interphase promotes localization to the nucleoplasm and regulates lamina assembly. Phosphorylation at Ser-22, Ser-392 and Ser-629 during interphase causes redistribution between the nucleus and the cytoplasm. Phosphorylation at Ser-22 by CDK1 regulates matrix stiffness. Phosphorylation status of Ser-22 determines its localization between double-strand break (DSB) sites and the nuclear matrix. Phosphorylated by ATR at Ser-282 in response to DNA damage, leading to lamin disassembly and nuclear envelope rupture. Phosphorylation also regulates stability in micronuclei arising from genome instability: phosphorylation at Ser-395 by ATR in response to genome instability and double-stranded DNA breaks primes LMNA for subsequent phosphorylation at Ser-392 by CDK1 and micronuclei envelope rupture. The rupture of micronuclear envelope triggers the cGAS-STING pathway thereby activating the type I interferon response and innate immunity. Post-translationally, acetylation by KAT8 is required for nuclear architecture. In terms of processing, sumoylation is necessary for the localization to the nuclear envelope.

The protein resides in the nucleus lamina. It is found in the nucleus envelope. Its subcellular location is the nucleus. It localises to the nucleoplasm. The protein localises to the nucleus matrix. Lamins are intermediate filament proteins that assemble into a filamentous meshwork, and which constitute the major components of the nuclear lamina, a fibrous layer on the nucleoplasmic side of the inner nuclear membrane. Lamins provide a framework for the nuclear envelope, bridging the nuclear envelope and chromatin, thereby playing an important role in nuclear assembly, chromatin organization, nuclear membrane and telomere dynamics. Lamin A and C also regulate matrix stiffness by conferring nuclear mechanical properties. The structural integrity of the lamina is strictly controlled by the cell cycle, as seen by the disintegration and formation of the nuclear envelope in prophase and telophase, respectively. Lamin A and C are present in equal amounts in the lamina of mammals. Also invoved in DNA repair: recruited by DNA repair proteins XRCC4 and IFFO1 to the DNA double-strand breaks (DSBs) to prevent chromosome translocation by immobilizing broken DNA ends. Required for normal development of peripheral nervous system and skeletal muscle and for muscle satellite cell proliferation. Required for osteoblastogenesis and bone formation. Also prevents fat infiltration of muscle and bone marrow, helping to maintain the volume and strength of skeletal muscle and bone. Required for cardiac homeostasis. Functionally, prelamin-A/C can accelerate smooth muscle cell senescence. It acts to disrupt mitosis and induce DNA damage in vascular smooth muscle cells (VSMCs), leading to mitotic failure, genomic instability, and premature senescence. This chain is Prelamin-A/C (Lmna), found in Rattus norvegicus (Rat).